The primary structure comprises 147 residues: Augurin (147 aa).

The N-terminal stretch at 1–31 is a signal peptide; it reads MANSSARPAFLVMTALALLLLLCVGPGGISG. 2 consecutive propeptides follow at residues 32–68 and 132–147; these read NKLK…LRRP and SAHS…YDDY.

It belongs to the augurin family.

It localises to the secreted. Its subcellular location is the cytoplasm. The protein localises to the apical cell membrane. Probable hormone that may attenuate cell proliferation and induce senescence of oligodendrocyte and neural precursor cells in the central nervous system. ECRG4-induced senescence is characterized by G1 arrest, RB1 dephosphorylation and accelerated CCND1 and CCND3 proteasomal degradation. The sequence is that of Augurin from Bos taurus (Bovine).